We begin with the raw amino-acid sequence, 354 residues long: Inactive ADP-ribosyltransferase ARH2 (354 aa).

Phosphoserine is present on Ser27.

It belongs to the ADP-ribosylglycohydrolase family.

It localises to the cytoplasm. Its subcellular location is the myofibril. It is found in the sarcomere. In terms of biological role, required for myofibril assembly and outgrowth of the cardiac chambers in the developing heart. Appears to be catalytically inactive, showing no activity against O-acetyl-ADP-ribose. In Pongo abelii (Sumatran orangutan), this protein is Inactive ADP-ribosyltransferase ARH2 (ADPRHL1).